A 336-amino-acid chain; its full sequence is Ferrochelatase (336 aa).

2 residues coordinate Fe cation: His206 and Glu287.

This sequence belongs to the ferrochelatase family.

The protein localises to the cytoplasm. The enzyme catalyses heme b + 2 H(+) = protoporphyrin IX + Fe(2+). It participates in porphyrin-containing compound metabolism; protoheme biosynthesis; protoheme from protoporphyrin-IX: step 1/1. Catalyzes the ferrous insertion into protoporphyrin IX. The sequence is that of Ferrochelatase from Neisseria meningitidis serogroup B (strain ATCC BAA-335 / MC58).